The primary structure comprises 681 residues: Serine/threonine-protein kinase PAK 6 (681 aa).

Disordered regions lie at residues 1-30 (MFRK…DPKE), 200-256 (QSSP…ESSL), and 268-355 (TAAT…PRTW). The CRIB domain occupies 12 to 25 (ISAPQNFQHRVHTS). Positions 26-406 (FDPKEGKFVG…VVDQGDPRLL (381 aa)) are linker. 2 stretches are compositionally biased toward low complexity: residues 201-212 (SSPPGASPPTGT) and 268-278 (TAATAPPSSSK). Positions 308-333 (SLPSDQPVGTFSPLTTSDTSSPQKSL) are enriched in polar residues. Residues 407–658 (LDSYVKIGEG…AQELLDHPFL (252 aa)) form the Protein kinase domain. ATP is bound by residues 413–421 (IGEGSTGIV) and lysine 436. Residue aspartate 526 is the Proton acceptor of the active site. Serine 560 carries the post-translational modification Phosphoserine; by autocatalysis.

The protein belongs to the protein kinase superfamily. STE Ser/Thr protein kinase family. STE20 subfamily. In terms of assembly, interacts tightly with GTP-bound but not GDP-bound CDC42/p21 and RAC1. Interacts with the androgen receptor AR. Interacts with IQGAP1 and PPM1B. Autophosphorylated. Phosphorylated by MAP2K6/MAPKK6, leading to PAK6 activation.

Its subcellular location is the cytoplasm. The protein resides in the nucleus. The catalysed reaction is L-seryl-[protein] + ATP = O-phospho-L-seryl-[protein] + ADP + H(+). It catalyses the reaction L-threonyl-[protein] + ATP = O-phospho-L-threonyl-[protein] + ADP + H(+). In terms of biological role, serine/threonine protein kinase that plays a role in the regulation of gene transcription. The kinase activity is induced by various effectors including AR or MAP2K6/MAPKK6. Phosphorylates the DNA-binding domain of androgen receptor/AR and thereby inhibits AR-mediated transcription. Also inhibits ESR1-mediated transcription. May play a role in cytoskeleton regulation by interacting with IQGAP1. May protect cells from apoptosis through phosphorylation of BAD. In Pongo abelii (Sumatran orangutan), this protein is Serine/threonine-protein kinase PAK 6 (PAK6).